The chain runs to 35 residues: Photosystem II reaction center protein M (35 aa).

The helical transmembrane segment at 5–25 (IFGLTATALFIIIPTSFLLIL) threads the bilayer.

Belongs to the PsbM family. In terms of assembly, PSII is composed of 1 copy each of membrane proteins PsbA, PsbB, PsbC, PsbD, PsbE, PsbF, PsbH, PsbI, PsbJ, PsbK, PsbL, PsbM, PsbT, PsbX, PsbY, PsbZ, Psb30/Ycf12, at least 3 peripheral proteins of the oxygen-evolving complex and a large number of cofactors. It forms dimeric complexes.

The protein localises to the plastid. It localises to the chloroplast thylakoid membrane. One of the components of the core complex of photosystem II (PSII). PSII is a light-driven water:plastoquinone oxidoreductase that uses light energy to abstract electrons from H(2)O, generating O(2) and a proton gradient subsequently used for ATP formation. It consists of a core antenna complex that captures photons, and an electron transfer chain that converts photonic excitation into a charge separation. This subunit is found at the monomer-monomer interface. The chain is Photosystem II reaction center protein M from Tetradesmus obliquus (Green alga).